A 53-amino-acid polypeptide reads, in one-letter code: uncharacterized protein (53 aa).

It is found in the mitochondrion. This is an uncharacterized protein from Saccharomyces cerevisiae (strain ATCC 204508 / S288c) (Baker's yeast).